An 82-amino-acid chain; its full sequence is Small ribosomal subunit protein bS18 (82 aa).

The disordered stretch occupies residues 1 to 24; it reads MKRTNMKKARMEQSRRPKKNPLKA.

It belongs to the bacterial ribosomal protein bS18 family. In terms of assembly, part of the 30S ribosomal subunit. Forms a tight heterodimer with protein bS6.

Its function is as follows. Binds as a heterodimer with protein bS6 to the central domain of the 16S rRNA, where it helps stabilize the platform of the 30S subunit. This chain is Small ribosomal subunit protein bS18, found in Corynebacterium jeikeium (strain K411).